Here is a 42-residue protein sequence, read N- to C-terminus: Photosystem I reaction center subunit IX (42 aa).

Residues Y7–I27 traverse the membrane as a helical segment.

The protein belongs to the PsaJ family.

Its subcellular location is the plastid. The protein resides in the chloroplast thylakoid membrane. Its function is as follows. May help in the organization of the PsaE and PsaF subunits. This Cryptomeria japonica (Japanese cedar) protein is Photosystem I reaction center subunit IX.